The chain runs to 80 residues: MAKENRTVKKVTTIQKTQVSSKHNTVSVTLVKSFHGRLPSHRETIVGLGLKRINHTKKFKDTSEIRGMINKVSYLLKVEN.

The protein belongs to the universal ribosomal protein uL30 family. In terms of assembly, part of the 50S ribosomal subunit.

The chain is Large ribosomal subunit protein uL30 from Vesicomyosocius okutanii subsp. Calyptogena okutanii (strain HA).